Consider the following 173-residue polypeptide: MKLLFPIFASLMLQYKVNTEFIGLRRCLMGFGRCRDHCNVDEKEIQKCKMKKCCVGPKVVKLIKNYLQYGTPNVLNEDVQEMLKSAKNSSAVIQRKHILSVLPQIKSTSFFANTNFVIIPNATPMNSAIISTVTPGQITYTAASTKSNIKESRDSATASPPPAPPPPNTLPTP.

An N-terminal signal peptide occupies residues Met1–Thr19. Cystine bridges form between Cys27–Cys53, Cys34–Cys48, and Cys38–Cys54. Residues Ser144–Pro173 form a disordered region. Pro residues predominate over residues Ser159–Pro173.

This sequence belongs to the beta-defensin family.

It localises to the secreted. In terms of biological role, has antibacterial activity. In Hylobates lar (Lar gibbon), this protein is Beta-defensin 129 (DEFB129).